The following is a 508-amino-acid chain: ATP synthase subunit alpha (508 aa).

An ATP-binding site is contributed by 169–176; that stretch reads GDRQTGKT.

The protein belongs to the ATPase alpha/beta chains family. In terms of assembly, F-type ATPases have 2 components, CF(1) - the catalytic core - and CF(0) - the membrane proton channel. CF(1) has five subunits: alpha(3), beta(3), gamma(1), delta(1), epsilon(1). CF(0) has three main subunits: a(1), b(2) and c(9-12). The alpha and beta chains form an alternating ring which encloses part of the gamma chain. CF(1) is attached to CF(0) by a central stalk formed by the gamma and epsilon chains, while a peripheral stalk is formed by the delta and b chains.

Its subcellular location is the cell inner membrane. It carries out the reaction ATP + H2O + 4 H(+)(in) = ADP + phosphate + 5 H(+)(out). Produces ATP from ADP in the presence of a proton gradient across the membrane. The alpha chain is a regulatory subunit. This is ATP synthase subunit alpha from Allorhizobium ampelinum (strain ATCC BAA-846 / DSM 112012 / S4) (Agrobacterium vitis (strain S4)).